Here is a 1132-residue protein sequence, read N- to C-terminus: Phycobiliprotein ApcE (1132 aa).

Position 196 (Cys196) interacts with (2R,3E)-phycocyanobilin. PBS-linker domains are found at residues 253-433 (DQQG…FRKV), 514-692 (LGPK…EKQE), 709-887 (PDID…KQNN), and 940-1121 (GRGQ…SSLS).

It belongs to the phycobilisome linker protein family. Heterodimer of ApcF (a variant beta-allophycocyanin). Phycobilisomes of this organism are composed of a two cylinder core, from which six rods radiate. The core is mainly composed of allophycocyanin alpha and beta chains and of minor components. In terms of processing, contains one covalently linked bilin chromophore. This protein autochromophorylates.

It localises to the cellular thylakoid membrane. Functionally, this protein is postulated to act both as terminal energy acceptor (by its phycobilin-like domains) and as a linker polypeptide (by its repeats and arms) that stabilizes the phycobilisome core architecture. Has intrinsic bilin lyase activity. The sequence is that of Phycobiliprotein ApcE (apcE) from Nostoc sp. (strain PCC 7120 / SAG 25.82 / UTEX 2576).